A 364-amino-acid polypeptide reads, in one-letter code: S-adenosylmethionine:tRNA ribosyltransferase-isomerase (364 aa).

This sequence belongs to the QueA family. In terms of assembly, monomer.

The protein resides in the cytoplasm. It catalyses the reaction 7-aminomethyl-7-carbaguanosine(34) in tRNA + S-adenosyl-L-methionine = epoxyqueuosine(34) in tRNA + adenine + L-methionine + 2 H(+). The protein operates within tRNA modification; tRNA-queuosine biosynthesis. Its function is as follows. Transfers and isomerizes the ribose moiety from AdoMet to the 7-aminomethyl group of 7-deazaguanine (preQ1-tRNA) to give epoxyqueuosine (oQ-tRNA). The polypeptide is S-adenosylmethionine:tRNA ribosyltransferase-isomerase (Lachnoclostridium phytofermentans (strain ATCC 700394 / DSM 18823 / ISDg) (Clostridium phytofermentans)).